Here is an 856-residue protein sequence, read N- to C-terminus: Genome polyprotein (856 aa).

The Peptidase S30 domain occupies lysine 141–phenylalanine 284. Residues histidine 192, aspartate 201, and serine 235 each act as for P1 proteinase activity in the active site. The short motif at proline 592–lysine 594 is the Involved in virions binding and aphid transmission element. A Peptidase C6 domain is found at leucine 618–glycine 740. Catalysis depends on for helper component proteinase activity residues cysteine 626 and histidine 699.

This sequence belongs to the potyviridae genome polyprotein family. Genome polyprotein of potyviruses undergoes post-translational proteolytic processing by the main proteinase NIa-pro resulting in the production of at least ten individual proteins. The P1 proteinase and the HC-pro cleave only their respective C-termini autocatalytically. 6K1 is essential for proper proteolytic separation of P3 from CI.

The enzyme catalyses Hydrolyzes a Gly-|-Gly bond at its own C-terminus, commonly in the sequence -Tyr-Xaa-Val-Gly-|-Gly, in the processing of the potyviral polyprotein.. Required for aphid transmission and also has proteolytic activity. Only cleaves a Gly-Gly dipeptide at its own C-terminus. Interacts with virions and aphid stylets. Acts as a suppressor of RNA-mediated gene silencing, also known as post-transcriptional gene silencing (PTGS), a mechanism of plant viral defense that limits the accumulation of viral RNAs. May have RNA-binding activity. This Potato virus Y (strain C) (PVY) protein is Genome polyprotein.